A 70-amino-acid polypeptide reads, in one-letter code: Bowman-Birk type proteinase inhibitor A7 (70 aa).

Intrachain disulfides connect Cys-12–Cys-31, Cys-18–Cys-29, Cys-38–Cys-45, and Cys-42–Cys-59.

The protein belongs to the Bowman-Birk serine protease inhibitor family. As to expression, expressed in bulb (at protein level).

Functionally, serine protease inhibitor. Strongly inhibits trypsin (Ki = 7.1 nM) and almost completely inhibits elastase. Also inhibits chymotrypsin (Ki = 19 nM). Does not inhibit bacterial subtilisin. In Hyacinthus orientalis (Common hyacinth), this protein is Bowman-Birk type proteinase inhibitor A7.